Consider the following 146-residue polypeptide: Putative type II restriction enzyme MjaORF1200P (146 aa).

It to A.pernix APE2001.

It carries out the reaction Endonucleolytic cleavage of DNA to give specific double-stranded fragments with terminal 5'-phosphates.. A putative type II restriction enzyme, its methylase would be M.MjaORF1200P (AC Q58600). The chain is Putative type II restriction enzyme MjaORF1200P from Methanocaldococcus jannaschii (strain ATCC 43067 / DSM 2661 / JAL-1 / JCM 10045 / NBRC 100440) (Methanococcus jannaschii).